A 145-amino-acid polypeptide reads, in one-letter code: 3-dehydroquinate dehydratase (145 aa).

Tyr23 (proton acceptor) is an active-site residue. Residues Asn75, His81, and Asp88 each coordinate substrate. The active-site Proton donor is His101. Substrate is bound by residues 102–103 and Arg112; that span reads LS.

Belongs to the type-II 3-dehydroquinase family. As to quaternary structure, homododecamer.

The enzyme catalyses 3-dehydroquinate = 3-dehydroshikimate + H2O. The protein operates within metabolic intermediate biosynthesis; chorismate biosynthesis; chorismate from D-erythrose 4-phosphate and phosphoenolpyruvate: step 3/7. In terms of biological role, catalyzes a trans-dehydration via an enolate intermediate. This Legionella pneumophila (strain Lens) protein is 3-dehydroquinate dehydratase.